The following is a 191-amino-acid chain: Inosine triphosphate pyrophosphatase (191 aa).

An ITP-binding site is contributed by 9 to 14 (TGNAKK). Residue Glu39 participates in Mg(2+) binding. ITP-binding positions include Lys51, 67–68 (DT), Lys84, 143–146 (FGWD), Lys166, and 171–172 (HR).

Belongs to the HAM1 NTPase family. As to quaternary structure, homodimer. The cofactor is Mg(2+). Mn(2+) serves as cofactor.

The protein localises to the cytoplasm. It catalyses the reaction ITP + H2O = IMP + diphosphate + H(+). It carries out the reaction dITP + H2O = dIMP + diphosphate + H(+). The catalysed reaction is XTP + H2O = XMP + diphosphate + H(+). Functionally, pyrophosphatase that hydrolyzes non-canonical purine nucleotides such as inosine triphosphate (ITP), deoxyinosine triphosphate (dITP) or xanthosine 5'-triphosphate (XTP) to their respective monophosphate derivatives. The enzyme does not distinguish between the deoxy- and ribose forms. Probably excludes non-canonical purines from RNA and DNA precursor pools, thus preventing their incorporation into RNA and DNA and avoiding chromosomal lesions. This is Inosine triphosphate pyrophosphatase from Drosophila melanogaster (Fruit fly).